A 185-amino-acid polypeptide reads, in one-letter code: Elongation factor P (185 aa).

This sequence belongs to the elongation factor P family.

The protein resides in the cytoplasm. The protein operates within protein biosynthesis; polypeptide chain elongation. In terms of biological role, involved in peptide bond synthesis. Stimulates efficient translation and peptide-bond synthesis on native or reconstituted 70S ribosomes in vitro. Probably functions indirectly by altering the affinity of the ribosome for aminoacyl-tRNA, thus increasing their reactivity as acceptors for peptidyl transferase. This is Elongation factor P from Desulforudis audaxviator (strain MP104C).